The sequence spans 159 residues: Crossover junction endodeoxyribonuclease RuvC (159 aa).

Active-site residues include Asp-7, Glu-67, and Asp-139. The Mg(2+) site is built by Asp-7, Glu-67, and Asp-139.

Belongs to the RuvC family. In terms of assembly, homodimer which binds Holliday junction (HJ) DNA. The HJ becomes 2-fold symmetrical on binding to RuvC with unstacked arms; it has a different conformation from HJ DNA in complex with RuvA. In the full resolvosome a probable DNA-RuvA(4)-RuvB(12)-RuvC(2) complex forms which resolves the HJ. Mg(2+) is required as a cofactor.

The protein localises to the cytoplasm. It catalyses the reaction Endonucleolytic cleavage at a junction such as a reciprocal single-stranded crossover between two homologous DNA duplexes (Holliday junction).. The RuvA-RuvB-RuvC complex processes Holliday junction (HJ) DNA during genetic recombination and DNA repair. Endonuclease that resolves HJ intermediates. Cleaves cruciform DNA by making single-stranded nicks across the HJ at symmetrical positions within the homologous arms, yielding a 5'-phosphate and a 3'-hydroxyl group; requires a central core of homology in the junction. The consensus cleavage sequence is 5'-(A/T)TT(C/G)-3'. Cleavage occurs on the 3'-side of the TT dinucleotide at the point of strand exchange. HJ branch migration catalyzed by RuvA-RuvB allows RuvC to scan DNA until it finds its consensus sequence, where it cleaves and resolves the cruciform DNA. The sequence is that of Crossover junction endodeoxyribonuclease RuvC from Thermosynechococcus vestitus (strain NIES-2133 / IAM M-273 / BP-1).